The sequence spans 275 residues: 2,3,4,5-tetrahydropyridine-2,6-dicarboxylate N-succinyltransferase (275 aa).

Substrate is bound by residues Arg-105 and Asp-142.

Belongs to the transferase hexapeptide repeat family. As to quaternary structure, homotrimer.

It localises to the cytoplasm. It catalyses the reaction (S)-2,3,4,5-tetrahydrodipicolinate + succinyl-CoA + H2O = (S)-2-succinylamino-6-oxoheptanedioate + CoA. It participates in amino-acid biosynthesis; L-lysine biosynthesis via DAP pathway; LL-2,6-diaminopimelate from (S)-tetrahydrodipicolinate (succinylase route): step 1/3. The sequence is that of 2,3,4,5-tetrahydropyridine-2,6-dicarboxylate N-succinyltransferase from Pectobacterium atrosepticum (strain SCRI 1043 / ATCC BAA-672) (Erwinia carotovora subsp. atroseptica).